Here is a 231-residue protein sequence, read N- to C-terminus: Protein crossbronx homolog (231 aa).

The region spanning 14–168 (LQEYKILTEY…VEECVRLSQA (155 aa)) is the UBC core domain.

The protein belongs to the ubiquitin-conjugating enzyme family. FTS subfamily.

The polypeptide is Protein crossbronx homolog (Culex quinquefasciatus (Southern house mosquito)).